The following is a 532-amino-acid chain: T-complex protein 1 subunit beta (532 aa).

It belongs to the TCP-1 chaperonin family. As to quaternary structure, heterooligomeric complex of about 850 to 900 kDa that forms two stacked rings, 12 to 16 nm in diameter.

The protein resides in the cytoplasm. Molecular chaperone; assists the folding of proteins upon ATP hydrolysis. Known to play a role, in vitro, in the folding of actin and tubulin. This chain is T-complex protein 1 subunit beta (cct2), found in Dictyostelium discoideum (Social amoeba).